Reading from the N-terminus, the 440-residue chain is COP9 signalosome complex subunit 5 (440 aa).

Residues 71-218 (VLISKLSCEK…MGAFRTIESK (148 aa)) enclose the MPN domain. Residues histidine 164, histidine 166, and aspartate 177 each contribute to the Zn(2+) site. The JAMM motif motif lies at 164 to 177 (HSHPGYDCWLSNID). The span at 319 to 341 (TQRGDSTETSSFGSMFSGDNTSD) shows a compositional bias: polar residues. Disordered stretches follow at residues 319–343 (TQRG…SDVD) and 376–400 (SRST…HDEG).

Belongs to the peptidase M67A family. CSN5 subfamily. As to quaternary structure, component of a COP9 signalosome-like (CSN) complex, composed of at least RRI1/CSN5, CSN9, RRI2/CSN10, PCI8/CSN11, CSN12 and CSI1. Within this complex it probably interacts directly with CSN12. Also interacts with RPN5. A divalent metal cation serves as cofactor.

It is found in the cytoplasm. Its subcellular location is the nucleus. Catalytic component of the COP9 signalosome (CSN) complex that acts as an regulator of the ubiquitin (Ubl) conjugation pathway by mediating the deneddylation of the cullin subunit of SCF-type E3 ubiquitin-protein ligase complexes. The CSN complex is involved in the regulation of the mating pheromone response. The polypeptide is COP9 signalosome complex subunit 5 (RRI1) (Saccharomyces cerevisiae (strain YJM789) (Baker's yeast)).